Here is a 112-residue protein sequence, read N- to C-terminus: Large ribosomal subunit protein bL17 (112 aa).

Belongs to the bacterial ribosomal protein bL17 family. As to quaternary structure, part of the 50S ribosomal subunit. Contacts protein L32.

This is Large ribosomal subunit protein bL17 from Caldanaerobacter subterraneus subsp. tengcongensis (strain DSM 15242 / JCM 11007 / NBRC 100824 / MB4) (Thermoanaerobacter tengcongensis).